The primary structure comprises 334 residues: WD repeat-containing protein 54 (334 aa).

3 WD repeats span residues 116–155, 162–206, and 250–289; these read SSVQ…PNIV, GHQT…TLLT, and AHAR…ESGS.

As to quaternary structure, homodimer and homotrimer; forms tight forms of dimers and trimers. Interacts with IZUMO1 and IZUMO1R/JUNO. Post-translationally, cross-linked to tightly form both dimers and trimers by TGM2. Cross-linking enhances the activation of EGF receptor-mediated signaling pathway. Cross-linking is inhibited by EGF. In terms of processing, ubiquitinated. EGF increases ubiquitination.

It localises to the vesicle. The protein resides in the cytoplasm. It is found in the cell membrane. In terms of biological role, plays a role in the adhesion and fusion of the sperm-oocyte membrane through its interactions with IZUMO1 and IZUMO1R/JUNO. When cross-linked to form dimers and trimers, it has a regulatory effect on ERK signaling pathway activity in response to EGF stimulation. Colocalizes with the EGF receptor in WDR54-specific vesicle where it sustains the internalization and controls the degradation of the EGF receptor after EGF stimulation. The chain is WD repeat-containing protein 54 from Mus musculus (Mouse).